The sequence spans 137 residues: Small ribosomal subunit protein bS16 (137 aa).

Positions 104–118 are enriched in basic and acidic residues; it reads ADEKKKPVLKPKTEK. A disordered region spans residues 104 to 137; it reads ADEKKKPVLKPKTEKAAPAPEAAAPEAESTEEQA. Residues 119 to 130 are compositionally biased toward low complexity; the sequence is AAPAPEAAAPEA.

This sequence belongs to the bacterial ribosomal protein bS16 family.

The chain is Small ribosomal subunit protein bS16 from Clavibacter michiganensis subsp. michiganensis (strain NCPPB 382).